The following is a 24-amino-acid chain: MCDILLNVLNIVFIGIAIILVIIC.

Residues 4–24 form a helical membrane-spanning segment; sequence ILLNVLNIVFIGIAIILVIIC.

Its subcellular location is the cell inner membrane. This Escherichia coli (strain K12) protein is Protein YahV.